The chain runs to 745 residues: Aminopeptidase NAALADL1 (745 aa).

The Cytoplasmic segment spans residues 1-6; it reads MHWVKI. Residues 7–28 traverse the membrane as a helical; Signal-anchor for type II membrane protein segment; the sequence is LGVALGAAALLGLGIILGHFAI. At 29 to 745 the chain is on the extracellular side; it reads PKATSPLTSS…AATLVPVADL (717 aa). Residues N128, N141, and N235 are each glycosylated (N-linked (GlcNAc...) asparagine). The Ca(2+) site is built by T263 and L266. N279, N302, and N329 each carry an N-linked (GlcNAc...) asparagine glycan. Cysteines 301 and 318 form a disulfide. The Zn(2+) site is built by H373 and D383. Residue E421 is the Proton donor/acceptor of the active site. Zn(2+) is bound at residue E422. Residues E430 and E433 each coordinate Ca(2+). Position 450 (D450) interacts with Zn(2+). 2 N-linked (GlcNAc...) asparagine glycosylation sites follow: N456 and N497. Residue H550 participates in Zn(2+) binding. N-linked (GlcNAc...) asparagine glycans are attached at residues N593 and N620.

This sequence belongs to the peptidase M28 family. M28B subfamily. In terms of assembly, homodimer. The cofactor is Zn(2+). Post-translationally, N-glycosylated.

It is found in the apical cell membrane. Functionally, aminopeptidase with broad substrate specificity. Has lower activity with substrates that have Asp or Glu in the P2' position, or Pro in the P3' position. Lacks activity with substrates that have both Pro in the P3' position and Asp or Glu in the P2' position. Lacks carboxypeptidase activity. Lacks dipeptidyl-peptidase IV type activity. The sequence is that of Aminopeptidase NAALADL1 (Naaladl1) from Mus musculus (Mouse).